The sequence spans 173 residues: Ribosome maturation factor RimM (173 aa).

The PRC barrel domain occupies 95–169 (EGSYYFKDIL…RIEVTLLEGL (75 aa)).

The protein belongs to the RimM family. Binds ribosomal protein uS19.

It localises to the cytoplasm. Functionally, an accessory protein needed during the final step in the assembly of 30S ribosomal subunit, possibly for assembly of the head region. Essential for efficient processing of 16S rRNA. May be needed both before and after RbfA during the maturation of 16S rRNA. It has affinity for free ribosomal 30S subunits but not for 70S ribosomes. In Lactobacillus gasseri (strain ATCC 33323 / DSM 20243 / BCRC 14619 / CIP 102991 / JCM 1131 / KCTC 3163 / NCIMB 11718 / NCTC 13722 / AM63), this protein is Ribosome maturation factor RimM.